Reading from the N-terminus, the 339-residue chain is Basic membrane protein A (339 aa).

An N-terminal signal peptide occupies residues 1-17 (MNKILLLILLESIVFLS). Cysteine 18 is lipidated: N-palmitoyl cysteine. Cysteine 18 is lipidated: S-diacylglycerol cysteine.

Belongs to the BMP lipoprotein family. In terms of assembly, monomer.

It is found in the cell inner membrane. Functionally, immunogenic protein. May be part of an ABC-type nucleoside uptake system involved in the purine salvage pathway. The chain is Basic membrane protein A (bmpA) from Borreliella burgdorferi (strain ATCC 35210 / DSM 4680 / CIP 102532 / B31) (Borrelia burgdorferi).